A 493-amino-acid chain; its full sequence is Glycerol kinase (493 aa).

Thr-12 lines the ADP pocket. ATP-binding residues include Thr-12, Thr-13, and Ser-14. Thr-12 lines the sn-glycerol 3-phosphate pocket. Residue Arg-16 coordinates ADP. The sn-glycerol 3-phosphate site is built by Arg-82, Glu-83, Tyr-132, and Asp-239. Glycerol is bound by residues Arg-82, Glu-83, Tyr-132, Asp-239, and Gln-240. Residues Thr-261 and Gly-303 each contribute to the ADP site. ATP is bound by residues Thr-261, Gly-303, Gln-307, and Gly-402. ADP contacts are provided by Gly-402 and Asn-406.

This sequence belongs to the FGGY kinase family.

The enzyme catalyses glycerol + ATP = sn-glycerol 3-phosphate + ADP + H(+). It participates in polyol metabolism; glycerol degradation via glycerol kinase pathway; sn-glycerol 3-phosphate from glycerol: step 1/1. Its function is as follows. Key enzyme in the regulation of glycerol uptake and metabolism. Catalyzes the phosphorylation of glycerol to yield sn-glycerol 3-phosphate. The chain is Glycerol kinase from Thermococcus gammatolerans (strain DSM 15229 / JCM 11827 / EJ3).